Here is a 497-residue protein sequence, read N- to C-terminus: Serine hydroxymethyltransferase (497 aa).

Residues Leu176 and 180-182 contribute to the (6S)-5,6,7,8-tetrahydrofolate site; that span reads GHL. Lys289 bears the N6-(pyridoxal phosphate)lysine mark.

This sequence belongs to the SHMT family. As to quaternary structure, homodimer. Requires pyridoxal 5'-phosphate as cofactor.

The protein localises to the cytoplasm. It catalyses the reaction (6R)-5,10-methylene-5,6,7,8-tetrahydrofolate + glycine + H2O = (6S)-5,6,7,8-tetrahydrofolate + L-serine. It functions in the pathway one-carbon metabolism; tetrahydrofolate interconversion. The protein operates within amino-acid biosynthesis; glycine biosynthesis; glycine from L-serine: step 1/1. Catalyzes the reversible interconversion of serine and glycine with tetrahydrofolate (THF) serving as the one-carbon carrier. This reaction serves as the major source of one-carbon groups required for the biosynthesis of purines, thymidylate, methionine, and other important biomolecules. Also exhibits THF-independent aldolase activity toward beta-hydroxyamino acids, producing glycine and aldehydes, via a retro-aldol mechanism. The polypeptide is Serine hydroxymethyltransferase (Chlamydia felis (strain Fe/C-56) (Chlamydophila felis)).